A 231-amino-acid polypeptide reads, in one-letter code: Phosphoribosylformylglycinamidine synthase subunit PurQ (231 aa).

Residues 3 to 231 (FGVLIFPGSN…ESMVGAMAKR (229 aa)) enclose the Glutamine amidotransferase type-1 domain. C86 acts as the Nucleophile in catalysis. Catalysis depends on residues H203 and E205.

Part of the FGAM synthase complex composed of 1 PurL, 1 PurQ and 2 PurS subunits.

It is found in the cytoplasm. The enzyme catalyses N(2)-formyl-N(1)-(5-phospho-beta-D-ribosyl)glycinamide + L-glutamine + ATP + H2O = 2-formamido-N(1)-(5-O-phospho-beta-D-ribosyl)acetamidine + L-glutamate + ADP + phosphate + H(+). It carries out the reaction L-glutamine + H2O = L-glutamate + NH4(+). It participates in purine metabolism; IMP biosynthesis via de novo pathway; 5-amino-1-(5-phospho-D-ribosyl)imidazole from N(2)-formyl-N(1)-(5-phospho-D-ribosyl)glycinamide: step 1/2. Part of the phosphoribosylformylglycinamidine synthase complex involved in the purines biosynthetic pathway. Catalyzes the ATP-dependent conversion of formylglycinamide ribonucleotide (FGAR) and glutamine to yield formylglycinamidine ribonucleotide (FGAM) and glutamate. The FGAM synthase complex is composed of three subunits. PurQ produces an ammonia molecule by converting glutamine to glutamate. PurL transfers the ammonia molecule to FGAR to form FGAM in an ATP-dependent manner. PurS interacts with PurQ and PurL and is thought to assist in the transfer of the ammonia molecule from PurQ to PurL. The sequence is that of Phosphoribosylformylglycinamidine synthase subunit PurQ from Koribacter versatilis (strain Ellin345).